A 548-amino-acid polypeptide reads, in one-letter code: T-complex protein 1 subunit theta (548 aa).

Ala2 is modified (N-acetylalanine). Residue Ser23 is modified to Phosphoserine. Tyr30 is subject to Phosphotyrosine. The ADP site is built by Tyr47 and Gly48. Position 99 (Asp99) interacts with Mg(2+). 4 residues coordinate ADP: Gly100, Thr101, Asn102, and Phe103. 3 residues coordinate ATP: Gly100, Thr101, and Asn102. Ser162 carries the post-translational modification Phosphoserine. The ADP site is built by Met169, Ser170, and Lys171. 2 residues coordinate ATP: Ser170 and Lys171. Residues Lys224, Lys254, and Lys260 each participate in a glycyl lysine isopeptide (Lys-Gly) (interchain with G-Cter in SUMO2) cross-link. Residues Ser269 and Ser317 each carry the phosphoserine modification. 2 positions are modified to N6-acetyllysine: Lys318 and Lys400. Residue Gly412 participates in ADP binding. Gly412 provides a ligand contact to ATP. A Glycyl lysine isopeptide (Lys-Gly) (interchain with G-Cter in SUMO1) cross-link involves residue Lys459. Lys466 bears the N6-acetyllysine mark. An ADP-binding site is contributed by Asp499. ATP contacts are provided by Asp499 and Lys504. Tyr505 is subject to Phosphotyrosine. The interval 529-548 is disordered; that stretch reads PAGGPKPPSGKKDWDEDQND. Lys534 participates in a covalent cross-link: Glycyl lysine isopeptide (Lys-Gly) (interchain with G-Cter in SUMO2). Ser537 carries the phosphoserine modification. Residue Lys539 forms a Glycyl lysine isopeptide (Lys-Gly) (interchain with G-Cter in SUMO2) linkage.

Belongs to the TCP-1 chaperonin family. As to quaternary structure, component of the chaperonin-containing T-complex (TRiC), a hexadecamer composed of two identical back-to-back stacked rings enclosing a protein folding chamber. Each ring is made up of eight different subunits: TCP1/CCT1, CCT2, CCT3, CCT4, CCT5, CCT6A/CCT6, CCT7, CCT8. Interacts with PACRG. Interacts with DNAAF4. Interacts with synaptic plasticity regulator PANTS.

It is found in the cytoplasm. The protein resides in the cytoskeleton. The protein localises to the microtubule organizing center. It localises to the centrosome. Its subcellular location is the cilium basal body. The catalysed reaction is ATP + H2O = ADP + phosphate + H(+). Component of the chaperonin-containing T-complex (TRiC), a molecular chaperone complex that assists the folding of actin, tubulin and other proteins upon ATP hydrolysis. The TRiC complex mediates the folding of WRAP53/TCAB1, thereby regulating telomere maintenance. As part of the TRiC complex may play a role in the assembly of BBSome, a complex involved in ciliogenesis regulating transports vesicles to the cilia. The protein is T-complex protein 1 subunit theta (CCT8) of Bos taurus (Bovine).